The following is a 219-amino-acid chain: Cytidylate kinase (219 aa).

21 to 29 serves as a coordination point for ATP; the sequence is GPAASGKGT.

Belongs to the cytidylate kinase family. Type 1 subfamily.

It localises to the cytoplasm. It carries out the reaction CMP + ATP = CDP + ADP. The enzyme catalyses dCMP + ATP = dCDP + ADP. The chain is Cytidylate kinase from Rickettsia conorii (strain ATCC VR-613 / Malish 7).